The sequence spans 1275 residues: Surfactin synthase subunit 3 (1275 aa).

The 76-residue stretch at 968-1043 folds into the Carrier domain; sequence GPRNEMEETI…GISAYLKNGG (76 aa). Ser-1003 bears the O-(pantetheine 4'-phosphoryl)serine mark. Residues 1059–1271 are thioesterase; sequence QIIFAFPPVL…ILLEFLNTQT (213 aa). Catalysis depends on residues Ser-1120, Asp-1147, and His-1247.

This sequence belongs to the ATP-dependent AMP-binding enzyme family. The cofactor is pantetheine 4'-phosphate.

It functions in the pathway antibiotic biosynthesis; surfactin biosynthesis. Probably activates a leucine. The polypeptide is Surfactin synthase subunit 3 (srfAC) (Bacillus subtilis (strain 168)).